Here is an 86-residue protein sequence, read N- to C-terminus: Large ribosomal subunit protein bL27 (86 aa).

The interval 1 to 21 (MAHKKGGGSSRNGRDSESKRL) is disordered.

It belongs to the bacterial ribosomal protein bL27 family.

This chain is Large ribosomal subunit protein bL27, found in Rubrobacter xylanophilus (strain DSM 9941 / JCM 11954 / NBRC 16129 / PRD-1).